The primary structure comprises 573 residues: NADH-ubiquinone oxidoreductase chain 5 (573 aa).

16 consecutive transmembrane segments (helical) span residues 4–24, 44–64, 85–105, 106–126, 147–167, 170–190, 212–234, 239–259, 268–288, 294–314, 337–357, 377–396, 422–442, 452–472, 487–507, and 552–572; these read ISFI…LYYL, IVMT…VLMI, FIML…SPNL, VSIL…VIYF, VALL…YIFY, VMQN…AAMT, SALV…FNIV, WLGQ…GLGA, IIAL…SMGF, FHLL…GAII, SACF…AGFY, FLYF…LVYY, LGLL…IFPF, LKML…LISI, LTLF…GMIF, and LKIY…FLLF.

This sequence belongs to the complex I subunit 5 family.

It is found in the mitochondrion inner membrane. It carries out the reaction a ubiquinone + NADH + 5 H(+)(in) = a ubiquinol + NAD(+) + 4 H(+)(out). Core subunit of the mitochondrial membrane respiratory chain NADH dehydrogenase (Complex I) that is believed to belong to the minimal assembly required for catalysis. Complex I functions in the transfer of electrons from NADH to the respiratory chain. The immediate electron acceptor for the enzyme is believed to be ubiquinone. The chain is NADH-ubiquinone oxidoreductase chain 5 (mt:ND5) from Drosophila yakuba (Fruit fly).